Reading from the N-terminus, the 251-residue chain is DNA repair protein RecO (251 aa).

Belongs to the RecO family.

In terms of biological role, involved in DNA repair and RecF pathway recombination. This chain is DNA repair protein RecO, found in Acetivibrio thermocellus (strain ATCC 27405 / DSM 1237 / JCM 9322 / NBRC 103400 / NCIMB 10682 / NRRL B-4536 / VPI 7372) (Clostridium thermocellum).